The sequence spans 242 residues: Aquaporin (242 aa).

Residues 1–11 (MNTSTKLICQK) are Cytoplasmic-facing. A helical transmembrane segment spans residues 12 to 32 (LFAEMLCSCIFGFAVYSAILN). Topologically, residues 33–39 (TKASNSS) are extracellular. Residues 40–60 (ISSTTVGLTVCFSSISLIYTF) traverse the membrane as a helical segment. At 61-83 (CDHSVAHFNPAITIAAICTGKLD) the chain is on the cytoplasmic side. Residues 69 to 71 (NPA) carry the NPA motif. The chain crosses the membrane as a helical span at residues 84–104 (ILLGIGYVIAQLIGFILATLL). Residues 105 to 133 (TVVCFPYGYLKTMEFIASARISDDISTVN) lie on the Extracellular side of the membrane. The helical transmembrane segment at 134–154 (LFFTEFILSFILVFIAFEVGI) threads the bilayer. At 155–175 (NAIREPGVTLFVGIKQIDRSK) the chain is on the cytoplasmic side. The helical transmembrane segment at 176–196 (FAPLTIGITLGFLAFLASTTS) threads the bilayer. Topologically, residues 197–217 (GGAFNPGIVWGPAIMGGNFDD) are extracellular. An NPG motif is present at residues 201–203 (NPG). The helical transmembrane segment at 218–238 (FVIYIISELSGGLLGAFIQVF) threads the bilayer. Over 239 to 242 (LLFK) the chain is Cytoplasmic.

This sequence belongs to the MIP/aquaporin (TC 1.A.8) family.

The protein localises to the cell membrane. Water channel required to facilitate the transport of water across membranes. Involved in osmotolerance. The chain is Aquaporin (AQP) from Enterocytozoon bieneusi (strain H348) (Microsporidian parasite).